A 381-amino-acid chain; its full sequence is ELMO domain-containing protein 3 (381 aa).

A compositionally biased stretch (basic and acidic residues) spans 1 to 17; that stretch reads MNENFHSFHEKELRDGQ. The segment at 1–31 is disordered; the sequence is MNENFHSFHEKELRDGQVESVSAGSSPPCDK. The 155-residue stretch at 170-324 folds into the ELMO domain; the sequence is MHGRVLQTIY…DLEMSAKKSP (155 aa).

The protein localises to the cell projection. The protein resides in the stereocilium. Its subcellular location is the kinocilium. It is found in the cytoplasm. It localises to the cytoskeleton. Acts as a GTPase-activating protein (GAP) for ARL2 with low specific activity. The polypeptide is ELMO domain-containing protein 3 (ELMOD3) (Bos taurus (Bovine)).